Reading from the N-terminus, the 450-residue chain is Phosphoglucosamine mutase (450 aa).

Serine 102 (phosphoserine intermediate) is an active-site residue. Positions 102, 243, 245, and 247 each coordinate Mg(2+). A Phosphoserine modification is found at serine 102.

The protein belongs to the phosphohexose mutase family. Requires Mg(2+) as cofactor. In terms of processing, activated by phosphorylation.

It carries out the reaction alpha-D-glucosamine 1-phosphate = D-glucosamine 6-phosphate. In terms of biological role, catalyzes the conversion of glucosamine-6-phosphate to glucosamine-1-phosphate. The sequence is that of Phosphoglucosamine mutase from Agrobacterium fabrum (strain C58 / ATCC 33970) (Agrobacterium tumefaciens (strain C58)).